A 125-amino-acid chain; its full sequence is MAVADLALIPDVDIDSDGVFKYVLIRVHSAPRSGAPAAESKEIVRGYKWAEYHADIYDKVSGDMQKQGCDCECLGGGRISHQSQDKKIHVYGYSMAYGPAQHAISTEKIKAKYPDYEVTWANDGY.

N-acetylalanine is present on Ala-2. Lys-21 is a binding site for substrate. The Proton acceptor role is filled by His-53. Ser-94 to Ala-96 serves as a coordination point for substrate.

Belongs to the janus family. Monomer. Expressed abundantly in heart and skeletal muscle.

The protein localises to the cytoplasm. The enzyme catalyses N(pros)-phospho-L-histidyl-[protein] + H2O = L-histidyl-[protein] + phosphate. The catalysed reaction is N(tele)-phospho-L-histidyl-[protein] + H2O = L-histidyl-[protein] + phosphate. Exhibits phosphohistidine phosphatase activity. The chain is 14 kDa phosphohistidine phosphatase (PHPT1) from Homo sapiens (Human).